A 358-amino-acid polypeptide reads, in one-letter code: Peptide chain release factor 1 (358 aa).

Position 233 is an N5-methylglutamine (Gln-233).

The protein belongs to the prokaryotic/mitochondrial release factor family. Post-translationally, methylated by PrmC. Methylation increases the termination efficiency of RF1.

It localises to the cytoplasm. Its function is as follows. Peptide chain release factor 1 directs the termination of translation in response to the peptide chain termination codons UAG and UAA. The sequence is that of Peptide chain release factor 1 from Clostridium botulinum (strain ATCC 19397 / Type A).